The following is a 1128-amino-acid chain: Exportin-6 (1128 aa).

In terms of domain architecture, Importin N-terminal spans 31 to 97; it reads IEELLNSFAG…RSCLPKLLLS (67 aa).

It belongs to the exportin family.

It is found in the nucleus. It localises to the cytoplasm. Mediates the nuclear export of actin and profilin-actin complexes in somatic cells. This is Exportin-6 (xpo6) from Danio rerio (Zebrafish).